The chain runs to 249 residues: MTSIKTIKSRAPKDYLVFALDVPTVSEAAEYVHLLKNHVGMFKVGLELFVRGGRRIIDTIHDAGGGAKIFLDLKLYDIPETVYRTMNAIAAMGVDFATVHCSGQKDMLAAAQEGADGQVGVLGVTVLTSMSADDVRDAGYGPEYIENISRLVMKRAAAAAEWGFAGIVCSPLEVSAMKERFGKGFVAVTPGIRPAKGLVSRDDQSRISTPGQAIRNGADYLVVGRPIREPDDSAAAAAAICKEIEEALK.

Substrate contacts are provided by residues aspartate 21, lysine 43, 72–81, threonine 128, arginine 193, glutamine 204, glycine 224, and arginine 225; that span reads DLKLYDIPET. Lysine 74 functions as the Proton donor in the catalytic mechanism.

This sequence belongs to the OMP decarboxylase family. Type 1 subfamily. In terms of assembly, homodimer.

It carries out the reaction orotidine 5'-phosphate + H(+) = UMP + CO2. It functions in the pathway pyrimidine metabolism; UMP biosynthesis via de novo pathway; UMP from orotate: step 2/2. In terms of biological role, catalyzes the decarboxylation of orotidine 5'-monophosphate (OMP) to uridine 5'-monophosphate (UMP). In Desulfosudis oleivorans (strain DSM 6200 / JCM 39069 / Hxd3) (Desulfococcus oleovorans), this protein is Orotidine 5'-phosphate decarboxylase.